The chain runs to 255 residues: Carboxy-S-adenosyl-L-methionine synthase (255 aa).

S-adenosyl-L-methionine contacts are provided by residues Tyr-45, 70 to 72 (GCS), 124 to 125 (DI), and Asn-139.

Belongs to the class I-like SAM-binding methyltransferase superfamily. Cx-SAM synthase family. Homodimer.

The enzyme catalyses prephenate + S-adenosyl-L-methionine = carboxy-S-adenosyl-L-methionine + 3-phenylpyruvate + H2O. Functionally, catalyzes the conversion of S-adenosyl-L-methionine (SAM) to carboxy-S-adenosyl-L-methionine (Cx-SAM). The chain is Carboxy-S-adenosyl-L-methionine synthase from Hamiltonella defensa subsp. Acyrthosiphon pisum (strain 5AT).